The chain runs to 226 residues: 8-oxoguanine DNA glycosylase/AP lyase (226 aa).

Active-site residues include K149 and D167.

Belongs to the type-2 OGG1 family.

It catalyses the reaction 2'-deoxyribonucleotide-(2'-deoxyribose 5'-phosphate)-2'-deoxyribonucleotide-DNA = a 3'-end 2'-deoxyribonucleotide-(2,3-dehydro-2,3-deoxyribose 5'-phosphate)-DNA + a 5'-end 5'-phospho-2'-deoxyribonucleoside-DNA + H(+). Functionally, catalyzes the excision of an oxidatively damaged form of guanine (7,8-dihydro-8-oxoguanine = 8-oxoG) from DNA. Also cleaves the DNA backbone at apurinic/apyrimidinic sites (AP sites). The protein is 8-oxoguanine DNA glycosylase/AP lyase of Aquifex aeolicus (strain VF5).